The primary structure comprises 648 residues: Mitotic interactor and substrate of PLK1 (648 aa).

S77 is modified (phosphoserine; by CDK1). T149 and T190 each carry phosphothreonine. A Phosphoserine modification is found at S220. 2 disordered regions span residues 242-383 and 430-460; these read VNDP…PEAR and KATE…GKAT. A Phosphoserine; by CDK1 modification is found at S253. Over residues 255 to 281 the composition is skewed to basic and acidic residues; sequence ETPKETPIEREIRLAQEREAELREQRG. At T256 the chain carries Phosphothreonine; by CDK1. The residue at position 318 (S318) is a Phosphoserine. The span at 325–339 shows a compositional bias: basic and acidic residues; the sequence is MVQETQREEDHRREG. T347 is subject to Phosphothreonine; by CDK1. Polar residues predominate over residues 349-367; the sequence is DWPSQDPQPGLQRSLSSDC. 2 positions are modified to phosphoserine: S352 and S364. A phosphoserine; by PLK1 mark is found at S365 and S439. Residues 440–450 are compositionally biased toward polar residues; the sequence is ESSGRSLSSKQ. S507 and S509 each carry phosphoserine. Residues 511–534 are a coiled coil; sequence DLLEREMESVLRREREVAEERRNA. A disordered region spans residues 539–568; the sequence is VFSPVPAEDESHEQDSRSSSRASGITGSYS. A Phosphoserine; by CDK1 modification is found at S541. Residue S554 is modified to Phosphoserine; by PLK1. A compositionally biased stretch (polar residues) spans 557–568; sequence SSRASGITGSYS. At S644 the chain carries Phosphoserine.

Belongs to the MISP family. Associates with F-actin. Interacts with DCTN1; this interaction regulates DCTN1 distribution at the cell cortex. Interacts with PTK2/FAK and MAPRE1. Post-translationally, phosphorylated by CDK1 and PLK1. CDK1 is the priming kinase for PLK1 phosphorylation. Phosphorylation by PLK1 is required for proper spindle orientation at metaphase.

The protein localises to the cell junction. It is found in the focal adhesion. The protein resides in the cytoplasm. Its subcellular location is the cytoskeleton. It localises to the cell cortex. Its function is as follows. Plays a role in mitotic spindle orientation and mitotic progression. Regulates the distribution of dynactin at the cell cortex in a PLK1-dependent manner, thus stabilizing cortical and astral microtubule attachments required for proper mitotic spindle positioning. May link microtubules to the actin cytoskeleton and focal adhesions. May be required for directed cell migration and centrosome orientation. May also be necessary for proper stacking of the Golgi apparatus. The chain is Mitotic interactor and substrate of PLK1 from Mus musculus (Mouse).